The sequence spans 156 residues: 1-methylthio-D-xylulose 5-phosphate methylsulfurylase (156 aa).

Positions 55 to 122 (YFEVGPGGHS…ADEALGFLCM (68 aa)) constitute a Cupin type-2 domain. Mn(2+) contacts are provided by E67, H69, H73, and H107. The active site involves C121.

The enzyme catalyses S-methyl-1-thio-D-xylulose 5-phosphate + glutathione = S-(methylsulfanyl)glutathione + 1-deoxy-D-xylulose 5-phosphate. It carries out the reaction S-(methylsulfanyl)glutathione + AH2 = methanethiol + glutathione + A. The protein operates within amino-acid biosynthesis; L-methionine biosynthesis via salvage pathway. It participates in metabolic intermediate biosynthesis; 1-deoxy-D-xylulose 5-phosphate biosynthesis. Catalyzes the formation of S-(methylsulfanyl)glutathione and 1-deoxy-D-xylulose 5-phosphate (DXP) from 1-methylthioxylulose 5-phosphate (MTXu-5P). The S-(methylsulfanyl)glutathione is reductively cleaved to relase methanethiol in a second reaction. Involved in the MTA-isoprenoid shunt of the methionine salvage pathway. The chain is 1-methylthio-D-xylulose 5-phosphate methylsulfurylase from Rhodospirillum rubrum (strain ATCC 11170 / ATH 1.1.1 / DSM 467 / LMG 4362 / NCIMB 8255 / S1).